A 159-amino-acid polypeptide reads, in one-letter code: 2-C-methyl-D-erythritol 2,4-cyclodiphosphate synthase (159 aa).

Residues Asp8 and His10 each coordinate a divalent metal cation. 4-CDP-2-C-methyl-D-erythritol 2-phosphate contacts are provided by residues 8-10 (DVH) and 34-35 (HS). His42 serves as a coordination point for a divalent metal cation. Residues 56–58 (DIG), 61–65 (FPDTD), 100–106 (AQAPKML), 132–135 (TTTE), Phe139, and Arg142 contribute to the 4-CDP-2-C-methyl-D-erythritol 2-phosphate site.

Belongs to the IspF family. Homotrimer. A divalent metal cation is required as a cofactor.

It catalyses the reaction 4-CDP-2-C-methyl-D-erythritol 2-phosphate = 2-C-methyl-D-erythritol 2,4-cyclic diphosphate + CMP. It functions in the pathway isoprenoid biosynthesis; isopentenyl diphosphate biosynthesis via DXP pathway; isopentenyl diphosphate from 1-deoxy-D-xylulose 5-phosphate: step 4/6. Involved in the biosynthesis of isopentenyl diphosphate (IPP) and dimethylallyl diphosphate (DMAPP), two major building blocks of isoprenoid compounds. Catalyzes the conversion of 4-diphosphocytidyl-2-C-methyl-D-erythritol 2-phosphate (CDP-ME2P) to 2-C-methyl-D-erythritol 2,4-cyclodiphosphate (ME-CPP) with a corresponding release of cytidine 5-monophosphate (CMP). The polypeptide is 2-C-methyl-D-erythritol 2,4-cyclodiphosphate synthase (Escherichia coli O139:H28 (strain E24377A / ETEC)).